A 309-amino-acid polypeptide reads, in one-letter code: Diacylglycerol kinase (309 aa).

The 132-residue stretch at 9–140 folds into the DAGKc domain; the sequence is HEIGKVTALT…IDLGRIQDDN (132 aa). ATP contacts are provided by residues 19 to 23, 76 to 82, and threonine 101; these read NPLSG and GDGVVSN. Mg(2+) contacts are provided by aspartate 226, aspartate 229, and leucine 231. The Proton acceptor role is filled by aspartate 285.

This sequence belongs to the diacylglycerol/lipid kinase family. Mg(2+) serves as cofactor.

It localises to the secreted. The protein localises to the cell wall. It carries out the reaction a 1,2-diacyl-sn-glycerol + ATP = a 1,2-diacyl-sn-glycero-3-phosphate + ADP + H(+). The enzyme catalyses N-hexadecanoylsphing-4-enine + ATP = N-(hexadecanoyl)-sphing-4-enine-1-phosphate + ADP + H(+). Functionally, catalyzes the phosphorylation of diacylglycerol (DAG) into phosphatidic acid. Is involved in the biosynthesis of phosphatidylinositol mannosides (PIMs), probably via a role in the biosynthesis of phosphatidylinositol (PI), a PIM precursor, which is derived from phosphatidic acid. Is also able to phosphorylate other various amphipathic lipids of host and bacterial origin in vitro, such as ceramide. In Mycobacterium tuberculosis (strain CDC 1551 / Oshkosh), this protein is Diacylglycerol kinase (dagK).